The primary structure comprises 130 residues: Phosphomevalonate dehydratase small subunit (130 aa).

Residue Ser62 is the Proton acceptor of the active site.

The protein belongs to the AcnX type II small subunit family. As to quaternary structure, heterodimer composed of a large subunit (PMDh-L) and a small subunit (PMDh-S).

It carries out the reaction (R)-5-phosphomevalonate = (2E)-3-methyl-5-phosphooxypent-2-enoate + H2O. It participates in isoprenoid biosynthesis; isopentenyl diphosphate biosynthesis via mevalonate pathway. In terms of biological role, component of a hydro-lyase that catalyzes the dehydration of mevalonate 5-phosphate (MVA5P) to form trans-anhydromevalonate 5-phosphate (tAHMP). Involved in the archaeal mevalonate (MVA) pathway, which provides fundamental precursors for isoprenoid biosynthesis, such as isopentenyl diphosphate (IPP) and dimethylallyl diphosphate (DMAPP). This Thermococcus onnurineus (strain NA1) protein is Phosphomevalonate dehydratase small subunit.